Consider the following 186-residue polypeptide: Elongation factor P (186 aa).

It belongs to the elongation factor P family.

The protein resides in the cytoplasm. Its pathway is protein biosynthesis; polypeptide chain elongation. Involved in peptide bond synthesis. Stimulates efficient translation and peptide-bond synthesis on native or reconstituted 70S ribosomes in vitro. Probably functions indirectly by altering the affinity of the ribosome for aminoacyl-tRNA, thus increasing their reactivity as acceptors for peptidyl transferase. This chain is Elongation factor P, found in Shewanella halifaxensis (strain HAW-EB4).